Here is a 226-residue protein sequence, read N- to C-terminus: PKHD-type hydroxylase Bind_0236 (226 aa).

Residues 78-178 form the Fe2OG dioxygenase domain; it reads TIFPPLFNRY…RIASFFWIQS (101 aa). Residues histidine 96, aspartate 98, and histidine 159 each coordinate Fe cation. 2-oxoglutarate is bound at residue arginine 169.

Fe(2+) serves as cofactor. Requires L-ascorbate as cofactor.

The protein is PKHD-type hydroxylase Bind_0236 of Beijerinckia indica subsp. indica (strain ATCC 9039 / DSM 1715 / NCIMB 8712).